We begin with the raw amino-acid sequence, 273 residues long: Flagellin FljK (273 aa).

It belongs to the bacterial flagellin family. In terms of assembly, in C.crescentus, the flagellar filament is composed of multiple flagellins of 29 kDa; 27 kDa and 25 kDa.

Its subcellular location is the secreted. The protein resides in the bacterial flagellum. Its function is as follows. Flagellin is the subunit protein which polymerizes to form the filaments of bacterial flagella. The polypeptide is Flagellin FljK (fljK) (Caulobacter vibrioides (strain ATCC 19089 / CIP 103742 / CB 15) (Caulobacter crescentus)).